Reading from the N-terminus, the 361-residue chain is MAGNTIGQLFRVTTFGESHGLALGCIVDGVPPGILLTEADLQHDLDRRRPGTSRYTTQRREPDQVKILSGVFEGVTTGTSIGLLIENTDQRSQDYSAIKDVFRPGHADYTYEQKYGLRDYRGGGRSSARETAMRVAAGAIAKKYLAEKFGIEIRGCLTQMGDIPLEIKDWSLVEQNPFFCPDPDKIDALDELMRALKKEGDSIGAKVTVVASGVPAGLGEPVFDRLDADIAHALMSINAVKGVEIGDGFDVVALRGSQNRDEITKDGFQSNHAGGILGGISSGQQIIAHMALKPTSSITVPGRTINRFGEEVEMITKGRHDPCVGIRAVPIAEAMLAIVLMDHLLRQRAQNADVKTDIPRW.

Residues R48 and R54 each coordinate NADP(+). FMN contacts are provided by residues 125 to 127 (RSS), 238 to 239 (NA), G278, 293 to 297 (KPTSS), and R319.

This sequence belongs to the chorismate synthase family. In terms of assembly, homotetramer. It depends on FMNH2 as a cofactor.

It catalyses the reaction 5-O-(1-carboxyvinyl)-3-phosphoshikimate = chorismate + phosphate. It participates in metabolic intermediate biosynthesis; chorismate biosynthesis; chorismate from D-erythrose 4-phosphate and phosphoenolpyruvate: step 7/7. Its function is as follows. Catalyzes the anti-1,4-elimination of the C-3 phosphate and the C-6 proR hydrogen from 5-enolpyruvylshikimate-3-phosphate (EPSP) to yield chorismate, which is the branch point compound that serves as the starting substrate for the three terminal pathways of aromatic amino acid biosynthesis. This reaction introduces a second double bond into the aromatic ring system. In Shigella boydii serotype 18 (strain CDC 3083-94 / BS512), this protein is Chorismate synthase.